The chain runs to 332 residues: Tryptophan--tRNA ligase (332 aa).

Residues 11–13 (QPS) and 19–20 (GN) contribute to the ATP site. The short motif at 12–20 (PSGELTIGN) is the 'HIGH' region element. Aspartate 135 is an L-tryptophan binding site. ATP contacts are provided by residues 147 to 149 (GQD), valine 186, and 195 to 199 (KMSKS). A 'KMSKS' region motif is present at residues 195 to 199 (KMSKS).

It belongs to the class-I aminoacyl-tRNA synthetase family. As to quaternary structure, homodimer.

Its subcellular location is the cytoplasm. The enzyme catalyses tRNA(Trp) + L-tryptophan + ATP = L-tryptophyl-tRNA(Trp) + AMP + diphosphate + H(+). Functionally, catalyzes the attachment of tryptophan to tRNA(Trp). The polypeptide is Tryptophan--tRNA ligase (Shewanella oneidensis (strain ATCC 700550 / JCM 31522 / CIP 106686 / LMG 19005 / NCIMB 14063 / MR-1)).